Reading from the N-terminus, the 254-residue chain is CRISPR-associated endonuclease Cas1 (254 aa).

Mn(2+)-binding residues include E78, H146, and E161.

Belongs to the CRISPR-associated endonuclease Cas1 family. Homodimer, forms a heterotetramer with a Cas2 homodimer. Mg(2+) is required as a cofactor. Requires Mn(2+) as cofactor.

Its function is as follows. CRISPR (clustered regularly interspaced short palindromic repeat), is an adaptive immune system that provides protection against mobile genetic elements (viruses, transposable elements and conjugative plasmids). CRISPR clusters contain spacers, sequences complementary to antecedent mobile elements, and target invading nucleic acids. CRISPR clusters are transcribed and processed into CRISPR RNA (crRNA). Acts as a dsDNA endonuclease. Involved in the integration of spacer DNA into the CRISPR cassette. This Leptospira interrogans serogroup Icterohaemorrhagiae serovar Lai (strain 56601) protein is CRISPR-associated endonuclease Cas1.